Reading from the N-terminus, the 1495-residue chain is Collagen alpha-1(XVII) chain (1495 aa).

Residues 1-17 (MDSVTKKTRQDGSEVTE) show a composition bias toward basic and acidic residues. The tract at residues 1-138 (MDSVTKKTRQ…VRLQSASPSG (138 aa)) is disordered. The Cytoplasmic segment spans residues 1–435 (MDSVTKKTRQ…CGSCCSWWKW (435 aa)). The segment at 1–535 (MDSVTKKTRQ…IERGYFRGER (535 aa)) is nonhelical region (NC16). A compositionally biased stretch (polar residues) spans 19–32 (QGGSSSGLKTSSHT). Residues 51–63 (SSGSGRLNSSSSG) are compositionally biased toward low complexity. 2 stretches are compositionally biased toward polar residues: residues 64–80 (YRQT…SPGS) and 95–104 (EGSSSANSSP). Residues 436-456 (LLGLLLAWLLLLGLLFGLIAL) form a helical; Signal-anchor for type II membrane protein membrane-spanning segment. The Extracellular portion of the chain corresponds to 457–1495 (AEEVRKLKSR…GRRRRRSVGV (1039 aa)). 7 disordered regions span residues 532-824 (RGER…EKGS), 847-999 (DLQG…SSSQ), 1160-1185 (EFSG…SSGI), 1201-1226 (SISG…TGLL), 1251-1278 (RSYI…LVAG), 1295-1336 (GGSI…GSYG), and 1396-1416 (MSYT…PGIS). Positions 536–1482 (GEPGMKGDMG…KGEKGEKGEQ (947 aa)) are triple-helical region. Composition is skewed to low complexity over residues 702–711 (PGAKGPAGQA) and 761–773 (RPGA…APGK). The segment covering 786–807 (PGPPGPPGPIGPTGPPGVPGPV) has biased composition (pro residues). Low complexity predominate over residues 809-818 (PAGLPGQQGP). Pro residues-rich tracts occupy residues 871–886 (PRGP…PPGR), 901–910 (PPGPPGPPGP), 946–955 (PPGPPGPPGP), 981–993 (PPGP…PPGP), 1167–1179 (PPGP…PPGI), 1208–1218 (PPGPPGPPGPP), and 1257–1269 (PPGP…PPGP). Positions 1296–1308 (GSIGAEGSHGGSL) are enriched in gly residues. The segment covering 1309–1336 (GASSSYGSSMSSSMSSYSASMGSDGSYG) has biased composition (low complexity). Residues 1403–1413 (PPGPPGPPGPP) show a composition bias toward pro residues. N-linked (GlcNAc...) asparagine glycosylation occurs at N1424. Residues 1435–1495 (THGTVRGPPG…GRRRRRSVGV (61 aa)) form a disordered region. Residues 1472-1481 (PKGEKGEKGE) are compositionally biased toward basic and acidic residues. Residues 1483–1495 (MYSGRRRRRSVGV) are nonhelical region (NC1). Residues 1486-1495 (GRRRRRSVGV) are compositionally biased toward basic residues.

As to quaternary structure, homotrimers of alpha 1(XVII)chains. Post-translationally, the intracellular/endo domain is disulfide-linked. In terms of processing, prolines at the third position of the tripeptide repeating unit (G-X-Y) are hydroxylated in some or all of the chains. The ectodomain is shedded from the surface of keratinocytes resulting in a 120-kDa soluble form, also named as 120 kDa linear IgA disease antigen homolog. The shedding is mediated by membrane-bound metalloproteases. In terms of tissue distribution, cornea specific.

Its subcellular location is the cell junction. It is found in the hemidesmosome. The protein resides in the membrane. It localises to the secreted. The protein localises to the extracellular space. Its subcellular location is the extracellular matrix. It is found in the basement membrane. Its function is as follows. May play a role in the integrity of hemidesmosome and the attachment of basal keratinocytes to the underlying basement membrane. The 120 kDa linear IgA disease antigen homolog is an anchoring filament component involved in dermal-epidermal cohesion. The polypeptide is Collagen alpha-1(XVII) chain (COL17A1) (Gallus gallus (Chicken)).